Here is a 506-residue protein sequence, read N- to C-terminus: GMP synthase [glutamine-hydrolyzing] (506 aa).

The Glutamine amidotransferase type-1 domain occupies 4 to 192; it reads KLIILDFGSQ…FLDICGMKRD (189 aa). Cys-79 serves as the catalytic Nucleophile. Residues His-167 and Glu-169 contribute to the active site. A GMPS ATP-PPase domain is found at 193–381; that stretch reads WTPASFIEAT…LGMMPHLIHR (189 aa). 220 to 226 contributes to the ATP binding site; that stretch reads SGGVDSS.

Homodimer.

The catalysed reaction is XMP + L-glutamine + ATP + H2O = GMP + L-glutamate + AMP + diphosphate + 2 H(+). It participates in purine metabolism; GMP biosynthesis; GMP from XMP (L-Gln route): step 1/1. Functionally, catalyzes the synthesis of GMP from XMP. This Porphyromonas gingivalis (strain ATCC 33277 / DSM 20709 / CIP 103683 / JCM 12257 / NCTC 11834 / 2561) protein is GMP synthase [glutamine-hydrolyzing].